Reading from the N-terminus, the 76-residue chain is Histone acetyltransferase (76 aa).

In terms of assembly, physically interacts with histone H3 in infected macrophages.

The protein resides in the secreted. The protein localises to the host cytoplasm. It is found in the host nucleus. It catalyses the reaction L-lysyl-[protein] + acetyl-CoA = N(6)-acetyl-L-lysyl-[protein] + CoA + H(+). Its activity is regulated as follows. Is completely inhibited by anacardic acid, an inhibitor of HAT activity. Functionally, histone acetyltransferase, which by binding to the host chromatin, may manipulate the expression of host genes involved in anti-inflammatory responses to evade clearance and to survive in the intracellular milieu. Acetylates histone H3 at the 'Lys-9' and 'Lys-14' positions. The chain is Histone acetyltransferase from Mycobacterium tuberculosis (strain CDC 1551 / Oshkosh).